Consider the following 440-residue polypeptide: Proline--tRNA ligase (440 aa).

This sequence belongs to the class-II aminoacyl-tRNA synthetase family. ProS type 2 subfamily. Homodimer.

The protein resides in the cytoplasm. It carries out the reaction tRNA(Pro) + L-proline + ATP = L-prolyl-tRNA(Pro) + AMP + diphosphate. Its function is as follows. Catalyzes the attachment of proline to tRNA(Pro) in a two-step reaction: proline is first activated by ATP to form Pro-AMP and then transferred to the acceptor end of tRNA(Pro). The chain is Proline--tRNA ligase from Agrobacterium fabrum (strain C58 / ATCC 33970) (Agrobacterium tumefaciens (strain C58)).